The following is a 182-amino-acid chain: Large ribosomal subunit protein bL19m (182 aa).

Residues Met1–Gly21 constitute a mitochondrion transit peptide.

This sequence belongs to the bacterial ribosomal protein bL19 family. Component of the mitochondrial large ribosomal subunit (mt-LSU). Mature yeast 74S mitochondrial ribosomes consist of a small (37S) and a large (54S) subunit. The 37S small subunit contains a 15S ribosomal RNA (15S mt-rRNA) and at least 32 different proteins. The 54S large subunit contains a 21S rRNA (21S mt-rRNA) and at least 45 different proteins.

It is found in the mitochondrion. Component of the mitochondrial ribosome (mitoribosome), a dedicated translation machinery responsible for the synthesis of mitochondrial genome-encoded proteins, including at least some of the essential transmembrane subunits of the mitochondrial respiratory chain. The mitoribosomes are attached to the mitochondrial inner membrane and translation products are cotranslationally integrated into the membrane. bL19m is essential for respiration. The polypeptide is Large ribosomal subunit protein bL19m (img1) (Schizosaccharomyces pombe (strain 972 / ATCC 24843) (Fission yeast)).